The following is a 150-amino-acid chain: Suppressor of HU sensitivity involved in recombination protein 1 (150 aa).

Component of the SHU complex composed of at least CSM2, PSY3, SHU1 and SHU2.

It is found in the nucleus. Its function is as follows. Plays a role in a RAD51/RAD54-dependent homologous recombination repair (HRR) pathway to repair MMS-induced lesions during S-phase. The protein is Suppressor of HU sensitivity involved in recombination protein 1 (SHU1) of Saccharomyces cerevisiae (strain ATCC 204508 / S288c) (Baker's yeast).